We begin with the raw amino-acid sequence, 1120 residues long: MIQQKFPATAKCFYVIDNFTKNLNQDFILSVSNEEEALQLYKQALFFSSNDNIYYFPSYDTIPYDHTSPNANIVSRRAETLTKLITNSKGKLLITHAANLLNKLPPKDFFSKYFLKLYPKIKFTMDELSMLLVENSFTRNTSSIDVGEFAVRGEIIDIILPGPKGYRINFSWDYIESIKEFDINTQISTKYCAELVISPANEIVLNSETIGNFKNNYLRNFGVNHTDNPLYEAVISGRKFAGYEQLLPLFYYSCSSLVDYLNNPICIFDNLSKQAILEFENSYNDFYLARSKANKLKVNNFYPTLSPTSLYFTASAITELLEQKNNILISYENSEQASLIGNISSISFIEKKTIFDKLFEIIKANFHKKIIICSSVLSSFERIKSIIQNYEYTFNEINKLDEAKASVINIGIIPLNQSFYTKEYLFITSSELLEEKTLYTNTNKKLKNILLELDNLKEGEFVVHKDHGIGQFLKLEAFKIQGKLHDFLKILYFGNDKLYVPVENIEVIKKYGSDNAELNKLGSVAWNKSKAKLKNRIKEISLHLIQIAAKRKLNISTPIELDLEAYDKFCANFPFSETEDQLTAINDIREDLTNGMLMDRLICGDVGFGKTEVAMRAVFMVAKSLNEYLPQVAVVVPTTILCSQHFSRFIERFKGFGLNIKQLSSVISSKEANIIRLELASGKINIIIGTHALLHKNTKFFNLKLLIIDEEQHFGVSQKEFLKSLKSSTHVLAMSATPIPRTLQMSMTGLKELSIIATPPLNRLEVRTSVMPFDPVIIRDALLREHFRGGRSFYVAPRIKDMEDIEKQLKQIVPELSYKIAHGKMTPSKIDEVMSEFYVGKFDILISTTIIESGIDIAEANTMIIHKADTLGLSQLYQLRGRIGRGKIRGYAYLTVASNKKITSHSLRRLEIIQNSCSLGSGFTIASHDADLRGFGNLIGEEQSGQIKEVGTELYQEMLEEQIALLKDDPIVLEQAFIPNINLGLSVFIPDSYVSDSALKIGLYRRIGNLSNEMEVEKFKDEMIDRFGLLPIEFNNLLDIVKIKLLCFKLNIENLDSGDDGFVIRFYKNADMTDKILKFVSRYSNQTKIKPNNKLVFIKKLVDKNIITEVNQLLWTLLEI.

The region spanning 591-756 (DLTNGMLMDR…MTGLKELSII (166 aa)) is the Helicase ATP-binding domain. 604–611 (GDVGFGKT) is a binding site for ATP. The short motif at 709 to 712 (DEEQ) is the DEEQ box element. The Helicase C-terminal domain maps to 777 to 933 (IIRDALLREH…TIASHDADLR (157 aa)).

This sequence in the N-terminal section; belongs to the UvrB family. It in the C-terminal section; belongs to the helicase family. RecG subfamily.

It is found in the cytoplasm. Its function is as follows. Couples transcription and DNA repair by recognizing RNA polymerase (RNAP) stalled at DNA lesions. Mediates ATP-dependent release of RNAP and its truncated transcript from the DNA, and recruitment of nucleotide excision repair machinery to the damaged site. The chain is Transcription-repair-coupling factor from Rickettsia prowazekii (strain Madrid E).